The following is a 559-amino-acid chain: DNA ligase (559 aa).

ATP is bound at residue E247. K249 functions as the N6-AMP-lysine intermediate in the catalytic mechanism. Positions 254, 269, 299, 339, 414, and 420 each coordinate ATP.

It belongs to the ATP-dependent DNA ligase family. Mg(2+) is required as a cofactor.

It carries out the reaction ATP + (deoxyribonucleotide)n-3'-hydroxyl + 5'-phospho-(deoxyribonucleotide)m = (deoxyribonucleotide)n+m + AMP + diphosphate.. In terms of biological role, DNA ligase that seals nicks in double-stranded DNA during DNA replication, DNA recombination and DNA repair. The protein is DNA ligase of Pyrococcus abyssi.